The primary structure comprises 148 residues: Large ribosomal subunit protein uL15 (148 aa).

Residues 14–54 are disordered; sequence HRKKRVGCGEGGGHGKTSGRGGKGQTARSGSSIRPGFEGGQ. Gly residues predominate over residues 21-37; sequence CGEGGGHGKTSGRGGKG.

Belongs to the universal ribosomal protein uL15 family. As to quaternary structure, part of the 50S ribosomal subunit.

In terms of biological role, binds to the 23S rRNA. The protein is Large ribosomal subunit protein uL15 of Opitutus terrae (strain DSM 11246 / JCM 15787 / PB90-1).